Consider the following 262-residue polypeptide: Acyl-[acyl-carrier-protein]--UDP-N-acetylglucosamine O-acyltransferase (262 aa).

It belongs to the transferase hexapeptide repeat family. LpxA subfamily. As to quaternary structure, homotrimer.

Its subcellular location is the cytoplasm. It catalyses the reaction a (3R)-hydroxyacyl-[ACP] + UDP-N-acetyl-alpha-D-glucosamine = a UDP-3-O-[(3R)-3-hydroxyacyl]-N-acetyl-alpha-D-glucosamine + holo-[ACP]. It participates in glycolipid biosynthesis; lipid IV(A) biosynthesis; lipid IV(A) from (3R)-3-hydroxytetradecanoyl-[acyl-carrier-protein] and UDP-N-acetyl-alpha-D-glucosamine: step 1/6. Functionally, involved in the biosynthesis of lipid A, a phosphorylated glycolipid that anchors the lipopolysaccharide to the outer membrane of the cell. The chain is Acyl-[acyl-carrier-protein]--UDP-N-acetylglucosamine O-acyltransferase from Cronobacter sakazakii (strain ATCC BAA-894) (Enterobacter sakazakii).